The following is a 167-amino-acid chain: Phosphorelay intermediate protein YPD1 (167 aa).

Residues 24-129 (DSDFSKGLII…DDEEIKIQVD (106 aa)) enclose the HPt domain. H64 bears the Phosphohistidine mark.

This sequence belongs to the YPD1 family. Interacts with the response regulatory domains of SLN1 and SSK1. Post-translationally, the phosphorelay mechanism involves the sequential transfer of a phosphate group from 'His-576' (H1) to 'Asp-1144' (D1) of SLN1, then to His-64 (H2) of YPD1 and finally to 'Asp-554' (D2) of SSK1 or 'Asp-427' (D2) of SKN7.

It localises to the cytoplasm. The protein localises to the nucleus. Functionally, phosphorelay intermediate protein that is part of the branched SLN1-YPD1-SKN7/SSK1 two-component regulatory system, which controls activity of the HOG1 pathway and gene expression in response to changes in the osmolarity of the extracellular environment. Catalyzes the phosphoryl group transfer from the membrane-bound osmosensing histidine kinase SLN1 to two distinct response regulator proteins, SSK1 in the cytoplasm, and transcription factor SKN7 in the nucleus. In Saccharomyces cerevisiae (strain ATCC 204508 / S288c) (Baker's yeast), this protein is Phosphorelay intermediate protein YPD1 (YPD1).